Here is a 271-residue protein sequence, read N- to C-terminus: Fatty acid elongase 2 (271 aa).

A helical transmembrane segment spans residues 16–36 (WMIDNVDVAGFLCLLYLGLVW). An N-linked (GlcNAc...) asparagine glycan is attached at asparagine 52. A run of 2 helical transmembrane segments spans residues 59 to 79 (VFIM…IVVV) and 110 to 130 (FWVG…VLLV). The HxxHH motif motif lies at 140–144 (HWYHH). The active-site Nucleophile is histidine 143. A run of 3 helical transmembrane segments spans residues 162–182 (IFVF…YFAM), 194–214 (IAPV…AVTM), and 241–261 (GVVM…ESYL).

It belongs to the ELO family.

The protein resides in the endoplasmic reticulum membrane. The enzyme catalyses an acyl-CoA + malonyl-CoA + H(+) = a 3-oxoacyl-CoA + CO2 + CoA. Its pathway is lipid metabolism; fatty acid biosynthesis. Functionally, involved in the synthesis of fatty acids. Elongates C10 fatty acids to C14. This Trypanosoma brucei brucei (strain 927/4 GUTat10.1) protein is Fatty acid elongase 2.